Reading from the N-terminus, the 247-residue chain is Adenosylcobinamide-GDP ribazoletransferase (247 aa).

Helical transmembrane passes span 34-54 (IITF…VFMV), 59-79 (CGAP…TGGF), 113-133 (GGLA…ELAL), 138-158 (ILAS…LLMY), and 194-214 (VLLP…AIFI).

It belongs to the CobS family. It depends on Mg(2+) as a cofactor.

It is found in the cell inner membrane. The enzyme catalyses alpha-ribazole + adenosylcob(III)inamide-GDP = adenosylcob(III)alamin + GMP + H(+). The catalysed reaction is alpha-ribazole 5'-phosphate + adenosylcob(III)inamide-GDP = adenosylcob(III)alamin 5'-phosphate + GMP + H(+). Its pathway is cofactor biosynthesis; adenosylcobalamin biosynthesis; adenosylcobalamin from cob(II)yrinate a,c-diamide: step 7/7. Functionally, joins adenosylcobinamide-GDP and alpha-ribazole to generate adenosylcobalamin (Ado-cobalamin). Also synthesizes adenosylcobalamin 5'-phosphate from adenosylcobinamide-GDP and alpha-ribazole 5'-phosphate. In Escherichia coli O45:K1 (strain S88 / ExPEC), this protein is Adenosylcobinamide-GDP ribazoletransferase.